The sequence spans 305 residues: Mas-related G-protein coupled receptor member A8 (305 aa).

The Extracellular portion of the chain corresponds to 1–17 (MDKTILGSIDIETLIRH). The helical transmembrane segment at 18 to 38 (LMIIIFGLVGLTGNAIVFWLL) threads the bilayer. Residues 39–46 (GFHLHRNA) are Cytoplasmic-facing. A helical transmembrane segment spans residues 47-67 (FLVYILNLALADFFYLLCHII). The Extracellular portion of the chain corresponds to 68 to 85 (NSIMFLLKVPSPNIILDH). Residues 86 to 106 (CFYTIMIVLYITGLSMLSAIS) form a helical membrane-spanning segment. Residues 107 to 129 (TERCLSVLCPIWYRCHRPEHTST) lie on the Cytoplasmic side of the membrane. A helical membrane pass occupies residues 130-150 (AMCAVIWVMSLLISILNGYFC). Residues Asn-151 and Asn-159 are each glycosylated (N-linked (GlcNAc...) asparagine). Over 151-172 (NFSSPKYVNNSVCQASDIFIRT) the chain is Extracellular. Residues 173 to 193 (YPIFLFVLLCLSTLALLARLF) form a helical membrane-spanning segment. The Cytoplasmic segment spans residues 194 to 207 (SGAGKRKFTRLFVT). Residues 208–228 (IMLAILVFLLCGLPLGFFWFL) traverse the membrane as a helical segment. Residues 229–243 (SPWIEDRFIVLDYRL) lie on the Extracellular side of the membrane. A helical membrane pass occupies residues 244 to 264 (FFASVVLTVVNSCANPIIYFF). Topologically, residues 265-305 (VGSFRHRLKQQTLKMFLQRALQDTPETPENMVEMSRSKAEP) are cytoplasmic.

Belongs to the G-protein coupled receptor 1 family. Mas subfamily. As to expression, expressed in a subset of sensory neurons that includes nociceptors. Expressed in the subclass of non-peptidergic sensory neurons that are IB4(+) and VR1(-).

It is found in the cell membrane. In terms of biological role, orphan receptor. May be a receptor for RFamide-family neuropeptides such as NPFF and NPAF, which are analgesic in vivo. May regulate nociceptor function and/or development, including the sensation or modulation of pain. This Mus musculus (Mouse) protein is Mas-related G-protein coupled receptor member A8 (Mrgpra8).